A 1298-amino-acid chain; its full sequence is Phosphoribosylformylglycinamidine synthase (1298 aa).

Positions 303 to 327 (FPGAATGSGGEIRDEGATGRGAKPK) are disordered. ATP-binding positions include 305 to 316 (GAATGSGGEIRD), 384 to 386 (TGY), and Ala676. Positions 677, 716, 720, and 884 each coordinate Mg(2+). Ser886 lines the ATP pocket. The region spanning 1045 to 1298 (VAVLREQGVN…MFRNARAWVN (254 aa)) is the Glutamine amidotransferase type-1 domain. Cys1138 (nucleophile) is an active-site residue. Catalysis depends on residues His1263 and Glu1265.

In the N-terminal section; belongs to the FGAMS family. In terms of assembly, monomer.

The protein resides in the cytoplasm. The catalysed reaction is N(2)-formyl-N(1)-(5-phospho-beta-D-ribosyl)glycinamide + L-glutamine + ATP + H2O = 2-formamido-N(1)-(5-O-phospho-beta-D-ribosyl)acetamidine + L-glutamate + ADP + phosphate + H(+). Its pathway is purine metabolism; IMP biosynthesis via de novo pathway; 5-amino-1-(5-phospho-D-ribosyl)imidazole from N(2)-formyl-N(1)-(5-phospho-D-ribosyl)glycinamide: step 1/2. Its function is as follows. Phosphoribosylformylglycinamidine synthase involved in the purines biosynthetic pathway. Catalyzes the ATP-dependent conversion of formylglycinamide ribonucleotide (FGAR) and glutamine to yield formylglycinamidine ribonucleotide (FGAM) and glutamate. In Pseudomonas savastanoi pv. phaseolicola (strain 1448A / Race 6) (Pseudomonas syringae pv. phaseolicola (strain 1448A / Race 6)), this protein is Phosphoribosylformylglycinamidine synthase.